A 110-amino-acid chain; its full sequence is Endoribonuclease SymE (110 aa).

The region spanning 29-74 is the SpoVT-AbrB domain; sequence SRYPDYTRIPALTMKGQWLEAAGFATGTEVDVRVMNGCIVLTAQQP.

This sequence belongs to the SymE family.

It localises to the cytoplasm. Involved in the degradation and recycling of damaged RNA. It is itself a target for degradation by the ATP-dependent protease Lon. The protein is Endoribonuclease SymE of Salmonella heidelberg (strain SL476).